Here is a 284-residue protein sequence, read N- to C-terminus: D-tagatose-1,6-bisphosphate aldolase subunit GatY (284 aa).

The Proton donor role is filled by Asp-82. Zn(2+)-binding residues include His-83 and His-180. Gly-181 contributes to the dihydroxyacetone phosphate binding site. His-208 is a binding site for Zn(2+). Dihydroxyacetone phosphate-binding positions include 209–211 (GAS) and 230–233 (NVAT).

The protein belongs to the class II fructose-bisphosphate aldolase family. TagBP aldolase GatY subfamily. In terms of assembly, forms a complex with GatZ. The cofactor is Zn(2+).

The catalysed reaction is D-tagatofuranose 1,6-bisphosphate = D-glyceraldehyde 3-phosphate + dihydroxyacetone phosphate. The protein operates within carbohydrate metabolism; D-tagatose 6-phosphate degradation; D-glyceraldehyde 3-phosphate and glycerone phosphate from D-tagatose 6-phosphate: step 2/2. Catalytic subunit of the tagatose-1,6-bisphosphate aldolase GatYZ, which catalyzes the reversible aldol condensation of dihydroxyacetone phosphate (DHAP or glycerone-phosphate) with glyceraldehyde 3-phosphate (G3P) to produce tagatose 1,6-bisphosphate (TBP). Requires GatZ subunit for full activity and stability. Is involved in the catabolism of galactitol and D-tagatose. The chain is D-tagatose-1,6-bisphosphate aldolase subunit GatY (gatY) from Klebsiella oxytoca.